The primary structure comprises 370 residues: Nodulation protein Z (370 aa).

The 315-residue stretch at 47 to 361 folds into the GT23 domain; that stretch reads SSNDRFVVSR…NDPGRLILIE (315 aa).

It belongs to the glycosyltransferase 23 family.

In terms of biological role, fucosyltransferase which adds the fucose moiety of the nod factor on its terminal reducing N-acetylglucosamine end. Uses GDP-fucose as the donor group. The polypeptide is Nodulation protein Z (nodZ) (Bradyrhizobium diazoefficiens (strain JCM 10833 / BCRC 13528 / IAM 13628 / NBRC 14792 / USDA 110)).